Here is a 260-residue protein sequence, read N- to C-terminus: Thiazole synthase (260 aa).

The active-site Schiff-base intermediate with DXP is the lysine 96. 1-deoxy-D-xylulose 5-phosphate contacts are provided by residues glycine 157, 184–185, and 206–207; these read AG and NT.

The protein belongs to the ThiG family. As to quaternary structure, homotetramer. Forms heterodimers with either ThiH or ThiS.

It localises to the cytoplasm. It catalyses the reaction [ThiS sulfur-carrier protein]-C-terminal-Gly-aminoethanethioate + 2-iminoacetate + 1-deoxy-D-xylulose 5-phosphate = [ThiS sulfur-carrier protein]-C-terminal Gly-Gly + 2-[(2R,5Z)-2-carboxy-4-methylthiazol-5(2H)-ylidene]ethyl phosphate + 2 H2O + H(+). Its pathway is cofactor biosynthesis; thiamine diphosphate biosynthesis. Functionally, catalyzes the rearrangement of 1-deoxy-D-xylulose 5-phosphate (DXP) to produce the thiazole phosphate moiety of thiamine. Sulfur is provided by the thiocarboxylate moiety of the carrier protein ThiS. In vitro, sulfur can be provided by H(2)S. The sequence is that of Thiazole synthase from Bradyrhizobium diazoefficiens (strain JCM 10833 / BCRC 13528 / IAM 13628 / NBRC 14792 / USDA 110).